Here is a 249-residue protein sequence, read N- to C-terminus: Type III pantothenate kinase (249 aa).

6–13 (DCGNSFIK) lines the ATP pocket. Residues Y93 and 100–103 (GLDR) each bind substrate. The active-site Proton acceptor is the D102. Residue D122 participates in K(+) binding. An ATP-binding site is contributed by T125. A substrate-binding site is contributed by T181.

Belongs to the type III pantothenate kinase family. In terms of assembly, homodimer. The cofactor is NH4(+). Requires K(+) as cofactor.

It is found in the cytoplasm. The catalysed reaction is (R)-pantothenate + ATP = (R)-4'-phosphopantothenate + ADP + H(+). The protein operates within cofactor biosynthesis; coenzyme A biosynthesis; CoA from (R)-pantothenate: step 1/5. Its function is as follows. Catalyzes the phosphorylation of pantothenate (Pan), the first step in CoA biosynthesis. This is Type III pantothenate kinase from Pseudomonas fluorescens (strain Pf0-1).